A 169-amino-acid chain; its full sequence is Peptide methionine sulfoxide reductase MsrA (169 aa).

C10 is an active-site residue.

Belongs to the MsrA Met sulfoxide reductase family.

The enzyme catalyses L-methionyl-[protein] + [thioredoxin]-disulfide + H2O = L-methionyl-(S)-S-oxide-[protein] + [thioredoxin]-dithiol. The catalysed reaction is [thioredoxin]-disulfide + L-methionine + H2O = L-methionine (S)-S-oxide + [thioredoxin]-dithiol. Its function is as follows. Has an important function as a repair enzyme for proteins that have been inactivated by oxidation. Catalyzes the reversible oxidation-reduction of methionine sulfoxide in proteins to methionine. In Streptococcus pyogenes serotype M2 (strain MGAS10270), this protein is Peptide methionine sulfoxide reductase MsrA.